The primary structure comprises 661 residues: DnaJ protein ERDJ2B (661 aa).

Topologically, residues 1 to 8 (MAESEENS) are lumenal. The chain crosses the membrane as a helical span at residues 9 to 29 (VLFPIFILTMMAIPLVPYTFV). Residues 30 to 65 (KLSRAFSKKQRSIHCQCLECDRSGKYKRSISQSISS) are Cytoplasmic-facing. Residues 66–86 (FTSCSNLTVVLLWIVMIFLIY) traverse the membrane as a helical segment. The Lumenal segment spans residues 87 to 190 (HTKNMSRESQ…FILNMNGESG (104 aa)). An N-linked (GlcNAc...) asparagine glycan is attached at asparagine 90. The region spanning 99–164 (EPFGILGLEP…LSRENFEKYG (66 aa)) is the J domain. A helical membrane pass occupies residues 191–211 (GILLLCTVGLCILLPLVIASI). The SEC63 domain occupies 206–597 (LVIASIYLWR…IGCDQKTSLK (392 aa)). Residues 212–661 (YLWRSSKYTG…SSEESGSDEE (450 aa)) are Cytoplasmic-facing. The disordered stretch occupies residues 608–661 (EGENAEEGLEEEDDEIEEEDYESEYSEDEEDKKRGSKKKVNKESSSEESGSDEE). Residues 609 to 637 (GENAEEGLEEEDDEIEEEDYESEYSEDEE) are compositionally biased toward acidic residues.

In terms of assembly, interacts with OEP61/TPR7. Expressed in leaves, flower buds and flowers.

The protein resides in the endoplasmic reticulum membrane. Its function is as follows. Required for integral membrane and secreted preprotein translocation across the endoplasmic reticulum membrane. The sequence is that of DnaJ protein ERDJ2B (ERDJ2B) from Arabidopsis thaliana (Mouse-ear cress).